Reading from the N-terminus, the 619-residue chain is 1-deoxy-D-xylulose-5-phosphate synthase (619 aa).

Residues H80 and 121–123 (GHS) contribute to the thiamine diphosphate site. D152 contacts Mg(2+). Residues 153-154 (GA), N181, Y288, and E370 contribute to the thiamine diphosphate site. Mg(2+) is bound at residue N181.

The protein belongs to the transketolase family. DXPS subfamily. As to quaternary structure, homodimer. Requires Mg(2+) as cofactor. The cofactor is thiamine diphosphate.

The catalysed reaction is D-glyceraldehyde 3-phosphate + pyruvate + H(+) = 1-deoxy-D-xylulose 5-phosphate + CO2. Its pathway is metabolic intermediate biosynthesis; 1-deoxy-D-xylulose 5-phosphate biosynthesis; 1-deoxy-D-xylulose 5-phosphate from D-glyceraldehyde 3-phosphate and pyruvate: step 1/1. Functionally, catalyzes the acyloin condensation reaction between C atoms 2 and 3 of pyruvate and glyceraldehyde 3-phosphate to yield 1-deoxy-D-xylulose-5-phosphate (DXP). The sequence is that of 1-deoxy-D-xylulose-5-phosphate synthase from Yersinia pseudotuberculosis serotype I (strain IP32953).